The following is a 196-amino-acid chain: Pyridoxal 5'-phosphate synthase subunit PdxT (196 aa).

46-48 provides a ligand contact to L-glutamine; it reads GES. Cys78 serves as the catalytic Nucleophile. L-glutamine-binding positions include Arg105 and 133–134; that span reads IR. Residues His169 and Glu171 each act as charge relay system in the active site.

The protein belongs to the glutaminase PdxT/SNO family. As to quaternary structure, in the presence of PdxS, forms a dodecamer of heterodimers. Only shows activity in the heterodimer.

It catalyses the reaction aldehydo-D-ribose 5-phosphate + D-glyceraldehyde 3-phosphate + L-glutamine = pyridoxal 5'-phosphate + L-glutamate + phosphate + 3 H2O + H(+). The catalysed reaction is L-glutamine + H2O = L-glutamate + NH4(+). It participates in cofactor biosynthesis; pyridoxal 5'-phosphate biosynthesis. Its function is as follows. Catalyzes the hydrolysis of glutamine to glutamate and ammonia as part of the biosynthesis of pyridoxal 5'-phosphate. The resulting ammonia molecule is channeled to the active site of PdxS. The sequence is that of Pyridoxal 5'-phosphate synthase subunit PdxT from Geobacillus stearothermophilus (Bacillus stearothermophilus).